The following is a 1383-amino-acid chain: Negative regulator of sporulation MDS3 (1383 aa).

3 Kelch repeats span residues 124–179, 199–246, and 356–402; these read CLYL…SPRF, GLFI…KDKE, and QNVV…WGGF. Residues 450–460 are compositionally biased toward polar residues; it reads GRSNNRTSSFV. Disordered regions lie at residues 450–506, 625–644, 653–825, 858–884, 1063–1114, 1251–1289, and 1321–1369; these read GRSN…VLDA, NQRL…DIPK, LLSS…DLFS, LDSF…SDES, NNSR…VDKE, QLKE…RLPQ, and SMTD…KSSS. Residues 631-644 show a composition bias toward low complexity; sequence KSSNSESSSSDIPK. The span at 693–707 shows a compositional bias: basic and acidic residues; sequence VNREEGSDCSKDRKT. Composition is skewed to low complexity over residues 726–758, 803–815, and 858–874; these read NSTS…EQIP, ESPF…SMSG, and LDSF…VSSV. Over residues 1084–1094 the composition is skewed to basic and acidic residues; the sequence is EGEKQEEIVSK. The span at 1251-1280 shows a compositional bias: low complexity; that stretch reads QLKESQLQSKSSPIIPTVSTVTPSPLPSIS. Polar residues predominate over residues 1341 to 1352; sequence LQQTMLSRTPTN.

Interacts with SIT4.

It localises to the cytoplasm. Negatively regulates early sporulation-specific genes. TOR signaling pathway component that contributes to morphogenesis as a regulator of this key morphogenetic pathway. Required for growth and hyphal formation at pH 9, for full virulence in a mouse model of systemic infection and for biofilm formation. Involved in chlamydospore formation, distinctive morphological feature of the fungal pathogen C.albicans that can be induced to form in oxygen-limited environments and has been reported in clinical specimens. In Candida albicans (strain SC5314 / ATCC MYA-2876) (Yeast), this protein is Negative regulator of sporulation MDS3 (MDS3).